Reading from the N-terminus, the 59-residue chain is Ribosome biogenesis protein Nop10 (59 aa).

Belongs to the NOP10 family.

Its function is as follows. Involved in ribosome biogenesis; more specifically in 18S rRNA pseudouridylation and in cleavage of pre-rRNA. The polypeptide is Ribosome biogenesis protein Nop10 (Thermococcus gammatolerans (strain DSM 15229 / JCM 11827 / EJ3)).